Reading from the N-terminus, the 296-residue chain is tRNA dimethylallyltransferase (296 aa).

Residue 9–16 (GPTAVGKT) participates in ATP binding. 11-16 (TAVGKT) is a substrate binding site. The interaction with substrate tRNA stretch occupies residues 34–37 (DSRQ).

It belongs to the IPP transferase family. Monomer. Requires Mg(2+) as cofactor.

It catalyses the reaction adenosine(37) in tRNA + dimethylallyl diphosphate = N(6)-dimethylallyladenosine(37) in tRNA + diphosphate. Its function is as follows. Catalyzes the transfer of a dimethylallyl group onto the adenine at position 37 in tRNAs that read codons beginning with uridine, leading to the formation of N6-(dimethylallyl)adenosine (i(6)A). This chain is tRNA dimethylallyltransferase, found in Chloroflexus aggregans (strain MD-66 / DSM 9485).